The sequence spans 159 residues: Phosphopantetheine adenylyltransferase (159 aa).

Residue Ser-9 participates in substrate binding. ATP is bound by residues 9-10 (SF) and His-17. Lys-41, Leu-73, and Lys-87 together coordinate substrate. Residues 88 to 90 (GLR), Glu-98, and 123 to 129 (NIHISSS) contribute to the ATP site.

This sequence belongs to the bacterial CoaD family. Homohexamer. The cofactor is Mg(2+).

Its subcellular location is the cytoplasm. The catalysed reaction is (R)-4'-phosphopantetheine + ATP + H(+) = 3'-dephospho-CoA + diphosphate. It participates in cofactor biosynthesis; coenzyme A biosynthesis; CoA from (R)-pantothenate: step 4/5. In terms of biological role, reversibly transfers an adenylyl group from ATP to 4'-phosphopantetheine, yielding dephospho-CoA (dPCoA) and pyrophosphate. The polypeptide is Phosphopantetheine adenylyltransferase (Clostridium beijerinckii (strain ATCC 51743 / NCIMB 8052) (Clostridium acetobutylicum)).